Reading from the N-terminus, the 104-residue chain is uncharacterized protein (104 aa).

This is an uncharacterized protein from Archaeoglobus fulgidus (strain ATCC 49558 / DSM 4304 / JCM 9628 / NBRC 100126 / VC-16).